We begin with the raw amino-acid sequence, 362 residues long: Chorismate synthase (362 aa).

Residues Arg-48 and Arg-54 each coordinate NADP(+). Residues 125–127, 237–238, Gly-277, 292–296, and Arg-318 each bind FMN; these read RSS, NA, and KPTSS.

The protein belongs to the chorismate synthase family. In terms of assembly, homotetramer. FMNH2 serves as cofactor.

It catalyses the reaction 5-O-(1-carboxyvinyl)-3-phosphoshikimate = chorismate + phosphate. Its pathway is metabolic intermediate biosynthesis; chorismate biosynthesis; chorismate from D-erythrose 4-phosphate and phosphoenolpyruvate: step 7/7. In terms of biological role, catalyzes the anti-1,4-elimination of the C-3 phosphate and the C-6 proR hydrogen from 5-enolpyruvylshikimate-3-phosphate (EPSP) to yield chorismate, which is the branch point compound that serves as the starting substrate for the three terminal pathways of aromatic amino acid biosynthesis. This reaction introduces a second double bond into the aromatic ring system. The sequence is that of Chorismate synthase from Idiomarina loihiensis (strain ATCC BAA-735 / DSM 15497 / L2-TR).